Here is an 873-residue protein sequence, read N- to C-terminus: Protein translocase subunit SecA (873 aa).

Residues Q85, 103–107 (GEGKT), and D492 contribute to the ATP site. Basic and acidic residues predominate over residues 835 to 856 (RYAEEEGKQPIRKENQIGRNDD). The segment at 835 to 873 (RYAEEEGKQPIRKENQIGRNDDCPCGSGKKYKKCCGKNA) is disordered. Positions 857, 859, 868, and 869 each coordinate Zn(2+). Over residues 863 to 873 (KKYKKCCGKNA) the composition is skewed to basic residues.

It belongs to the SecA family. In terms of assembly, monomer and homodimer. Part of the essential Sec protein translocation apparatus which comprises SecA, SecYEG and auxiliary proteins SecDF. Other proteins may also be involved. It depends on Zn(2+) as a cofactor.

The protein resides in the cell membrane. It localises to the cytoplasm. The enzyme catalyses ATP + H2O + cellular proteinSide 1 = ADP + phosphate + cellular proteinSide 2.. Part of the Sec protein translocase complex. Interacts with the SecYEG preprotein conducting channel. Has a central role in coupling the hydrolysis of ATP to the transfer of proteins into and across the cell membrane, serving as an ATP-driven molecular motor driving the stepwise translocation of polypeptide chains across the membrane. The sequence is that of Protein translocase subunit SecA from Desulforamulus reducens (strain ATCC BAA-1160 / DSM 100696 / MI-1) (Desulfotomaculum reducens).